The chain runs to 224 residues: tRNA (guanine-N(7)-)-methyltransferase (224 aa).

S-adenosyl-L-methionine is bound by residues Glu-54, Glu-79, Asp-106, and Asp-129. Asp-129 is a catalytic residue. Lys-133 and Asp-165 together coordinate substrate.

The protein belongs to the class I-like SAM-binding methyltransferase superfamily. TrmB family.

It catalyses the reaction guanosine(46) in tRNA + S-adenosyl-L-methionine = N(7)-methylguanosine(46) in tRNA + S-adenosyl-L-homocysteine. It functions in the pathway tRNA modification; N(7)-methylguanine-tRNA biosynthesis. In terms of biological role, catalyzes the formation of N(7)-methylguanine at position 46 (m7G46) in tRNA. In Chlamydia felis (strain Fe/C-56) (Chlamydophila felis), this protein is tRNA (guanine-N(7)-)-methyltransferase.